Reading from the N-terminus, the 265-residue chain is Apolipoprotein A-I (265 aa).

A signal peptide spans 1–16 (MKAAVLIWLFLMGSQA). 2 repeat units span residues 66–87 (LKLL…EQLG) and 88–109 (PVTQ…QEMS). The interval 66–265 (LKLLDNWDSL…EEYTKKLSSQ (200 aa)) is 10 X approximate tandem repeats. M108 carries the methionine sulfoxide modification. Residues 110 to 120 (KDLEEVKAQVQ) form a 3; half-length repeat. A run of 5 repeats spans residues 121–142 (PYLD…QKLE), 143–164 (PLRT…EKLS), 165–186 (PLAE…TQLA), 187–208 (PYSD…ENSG), and 209–230 (ASLA…EKAK). M134 carries the post-translational modification Methionine sulfoxide. One copy of the 9; half-length repeat lies at 231 to 241 (PALDDLRQGLL). Repeat unit 10 spans residues 242-265 (PVLESFKVSFLSALEEYTKKLSSQ).

It belongs to the apolipoprotein A1/A4/E family. In terms of assembly, homodimer. Interacts with APOA1BP and CLU. Component of a sperm activating protein complex (SPAP), consisting of APOA1, an immunoglobulin heavy chain, an immunoglobulin light chain and albumin. Interacts with NDRG1. Interacts with SCGB3A2. Interacts with NAXE and YJEFN3. Glycosylated. In terms of processing, palmitoylated. Post-translationally, phosphorylation sites are present in the extracellular medium.

It localises to the secreted. Participates in the reverse transport of cholesterol from tissues to the liver for excretion by promoting cholesterol efflux from tissues and by acting as a cofactor for the lecithin cholesterol acyltransferase (LCAT). As part of the SPAP complex, activates spermatozoa motility. The sequence is that of Apolipoprotein A-I (APOA1) from Aotus nancymaae (Ma's night monkey).